A 155-amino-acid polypeptide reads, in one-letter code: Small ribosomal subunit protein bS6 (155 aa).

Positions 94-155 are disordered; the sequence is EKHEEGPSAM…RPRRPREDRV (62 aa).

The protein belongs to the bacterial ribosomal protein bS6 family.

Functionally, binds together with bS18 to 16S ribosomal RNA. The protein is Small ribosomal subunit protein bS6 of Rhizobium johnstonii (strain DSM 114642 / LMG 32736 / 3841) (Rhizobium leguminosarum bv. viciae).